Reading from the N-terminus, the 132-residue chain is Urease subunit beta (132 aa).

It belongs to the urease beta subunit family. Heterotrimer of UreA (gamma), UreB (beta) and UreC (alpha) subunits. Three heterotrimers associate to form the active enzyme.

The protein resides in the cytoplasm. The enzyme catalyses urea + 2 H2O + H(+) = hydrogencarbonate + 2 NH4(+). The protein operates within nitrogen metabolism; urea degradation; CO(2) and NH(3) from urea (urease route): step 1/1. The sequence is that of Urease subunit beta from Natronomonas pharaonis (strain ATCC 35678 / DSM 2160 / CIP 103997 / JCM 8858 / NBRC 14720 / NCIMB 2260 / Gabara) (Halobacterium pharaonis).